A 361-amino-acid chain; its full sequence is 3-dehydroquinate synthase (361 aa).

NAD(+)-binding positions include 71 to 76, 105 to 109, 129 to 130, K142, K151, and 169 to 172; these read DGEQFK, GVIGD, TT, and CLQT. E184, H247, and H264 together coordinate Zn(2+).

This sequence belongs to the sugar phosphate cyclases superfamily. Dehydroquinate synthase family. Requires Co(2+) as cofactor. It depends on Zn(2+) as a cofactor. The cofactor is NAD(+).

The protein localises to the cytoplasm. It carries out the reaction 7-phospho-2-dehydro-3-deoxy-D-arabino-heptonate = 3-dehydroquinate + phosphate. It functions in the pathway metabolic intermediate biosynthesis; chorismate biosynthesis; chorismate from D-erythrose 4-phosphate and phosphoenolpyruvate: step 2/7. In terms of biological role, catalyzes the conversion of 3-deoxy-D-arabino-heptulosonate 7-phosphate (DAHP) to dehydroquinate (DHQ). The chain is 3-dehydroquinate synthase from Edwardsiella ictaluri (strain 93-146).